We begin with the raw amino-acid sequence, 397 residues long: 1-deoxy-D-xylulose 5-phosphate reductoisomerase (397 aa).

NADPH-binding residues include threonine 10, glycine 11, serine 12, isoleucine 13, glutamine 38, and asparagine 123. Lysine 124 contacts 1-deoxy-D-xylulose 5-phosphate. Glutamate 125 contributes to the NADPH binding site. Aspartate 149 serves as a coordination point for Mn(2+). Positions 150, 151, 185, and 208 each coordinate 1-deoxy-D-xylulose 5-phosphate. Glutamate 151 is a Mn(2+) binding site. Glycine 214 is a binding site for NADPH. 4 residues coordinate 1-deoxy-D-xylulose 5-phosphate: serine 221, asparagine 226, lysine 227, and glutamate 230. Glutamate 230 is a binding site for Mn(2+).

It belongs to the DXR family. Mg(2+) serves as cofactor. The cofactor is Mn(2+).

It carries out the reaction 2-C-methyl-D-erythritol 4-phosphate + NADP(+) = 1-deoxy-D-xylulose 5-phosphate + NADPH + H(+). Its pathway is isoprenoid biosynthesis; isopentenyl diphosphate biosynthesis via DXP pathway; isopentenyl diphosphate from 1-deoxy-D-xylulose 5-phosphate: step 1/6. Catalyzes the NADPH-dependent rearrangement and reduction of 1-deoxy-D-xylulose-5-phosphate (DXP) to 2-C-methyl-D-erythritol 4-phosphate (MEP). This Idiomarina loihiensis (strain ATCC BAA-735 / DSM 15497 / L2-TR) protein is 1-deoxy-D-xylulose 5-phosphate reductoisomerase.